The primary structure comprises 181 residues: Ubiquitin-conjugating enzyme E2 19 (181 aa).

Residues 1–10 are compositionally biased toward polar residues; that stretch reads MATVNGYTGN. The interval 1–33 is disordered; that stretch reads MATVNGYTGNTPAATTPAATGSKQSAPPTKTVD. Over residues 11-20 the composition is skewed to low complexity; sequence TPAATTPAAT. Positions 36–181 constitute a UBC core domain; that stretch reads SVLKRLQSEL…VEKLYKPLNA (146 aa). Catalysis depends on Cys-120, which acts as the Glycyl thioester intermediate.

This sequence belongs to the ubiquitin-conjugating enzyme family. Interacts with OR. Binds to LOT1. Expressed in all tissues with cell division activities and in mature leaves.

The protein localises to the cytoplasm. The protein resides in the nucleus. It catalyses the reaction S-ubiquitinyl-[E1 ubiquitin-activating enzyme]-L-cysteine + [E2 ubiquitin-conjugating enzyme]-L-cysteine = [E1 ubiquitin-activating enzyme]-L-cysteine + S-ubiquitinyl-[E2 ubiquitin-conjugating enzyme]-L-cysteine.. Its pathway is protein modification; protein ubiquitination. Functionally, accepts the ubiquitin from the E1 complex and catalyzes its covalent attachment to other proteins. Part of the anaphase-promoting complex (APC). May have a key function during cell cycle and be involved in cyclin B1 degradation. Triggers OR ubiquitination that mediates its subsequent nuclear localization. Involved in the repression of early light-induced proteins (ELIPs, e.g. ELIP1 and ELIP2) expression, probably via OR nuclear relocalization. The polypeptide is Ubiquitin-conjugating enzyme E2 19 (Arabidopsis thaliana (Mouse-ear cress)).